We begin with the raw amino-acid sequence, 999 residues long: Probable K(+)/H(+) antiporter subunit A/B (999 aa).

Positions 1–20 are disordered; that stretch reads MTRPASVLAGPKSRPPIHSQ. Helical transmembrane passes span 31–48, 63–85, 106–128, 138–160, 162–181, 191–213, 233–255, 270–292, 299–321, 336–358, 389–411, 442–464, 488–510, 530–552, 604–621, 636–653, 660–682, 686–708, 729–751, 788–807, 846–868, 878–900, 913–935, and 955–977; these read LLSV…IAIF, AIAL…GGVL, FAWL…ARYY, FFAL…NLIL, AVFW…YWHH, MALT…IGKI, PLYG…QFPF, SAYL…FWPV, WFWI…AIFQ, LGLI…VFHI, GLFH…MAGV, YVAT…GVFF, FLVL…FLHT, GWNI…YFLM, RLLV…LLLG, AFAL…GSAY, LASL…WLSA, AVTQ…RWLP, LRDL…TVMT, TLGE…ALLL, FIPA…FLFL, FAAG…TRWV, SIGL…PFLT, and ILFD…IALA.

In the N-terminal section; belongs to the CPA3 antiporters (TC 2.A.63) subunit A family. It in the C-terminal section; belongs to the CPA3 antiporters (TC 2.A.63) subunit B family. As to quaternary structure, may form a heterooligomeric complex that consists of six subunits: PhaAB, PhaC, PhaD, PhaE, PhaF and PhaG.

The protein localises to the cell membrane. In terms of biological role, part of a K(+) efflux system which is required for the adaptation of R.meliloti to alkaline pH as well as for the infection process during symbiotic nodule development. This is Probable K(+)/H(+) antiporter subunit A/B (phaAB) from Rhizobium meliloti (strain 1021) (Ensifer meliloti).